The following is a 1385-amino-acid chain: Kinesin-like protein KIF15 (1385 aa).

The tract at residues 1-24 (MAPGCKSELRNVTNSHSNQPSNED) is disordered. Residues 10-21 (RNVTNSHSNQPS) are compositionally biased toward polar residues. Residues 26–363 (AIKVFVRIRP…LNFAQRAKLI (338 aa)) form the Kinesin motor domain. 109-116 (GQTGSGKT) contacts ATP. Positions 368 to 1385 (VVNEDTQGNV…NVFLKERKKE (1018 aa)) form a coiled coil. Lysine 1007 carries the post-translational modification N6-acetyllysine. Serine 1139 and serine 1167 each carry phosphoserine. The tract at residues 1222 to 1243 (DMKRQGESSSQSRPDSQQLKNE) is disordered. Over residues 1228–1241 (ESSSQSRPDSQQLK) the composition is skewed to polar residues.

The protein belongs to the TRAFAC class myosin-kinesin ATPase superfamily. Kinesin family. KLP2 subfamily. Interacts with MKI67 and TPX2. In terms of tissue distribution, expressed in sympathetic neurons.

Its subcellular location is the cytoplasm. The protein resides in the cytoskeleton. It is found in the spindle. In terms of biological role, plus-end directed kinesin-like motor enzyme involved in mitotic spindle assembly. The sequence is that of Kinesin-like protein KIF15 (Kif15) from Rattus norvegicus (Rat).